We begin with the raw amino-acid sequence, 328 residues long: Beta-ketoacyl-[acyl-carrier-protein] synthase III 2 (328 aa).

Catalysis depends on residues cysteine 113 and histidine 255. Residues 256–260 (QANAR) are ACP-binding. The active site involves asparagine 285.

Belongs to the thiolase-like superfamily. FabH family. Homodimer.

It localises to the cytoplasm. The catalysed reaction is malonyl-[ACP] + acetyl-CoA + H(+) = 3-oxobutanoyl-[ACP] + CO2 + CoA. It functions in the pathway lipid metabolism; fatty acid biosynthesis. In terms of biological role, catalyzes the condensation reaction of fatty acid synthesis by the addition to an acyl acceptor of two carbons from malonyl-ACP. Catalyzes the first condensation reaction which initiates fatty acid synthesis and may therefore play a role in governing the total rate of fatty acid production. Possesses both acetoacetyl-ACP synthase and acetyl transacylase activities. Its substrate specificity determines the biosynthesis of branched-chain and/or straight-chain of fatty acids. This is Beta-ketoacyl-[acyl-carrier-protein] synthase III 2 from Lactiplantibacillus plantarum (strain ATCC BAA-793 / NCIMB 8826 / WCFS1) (Lactobacillus plantarum).